The following is a 124-amino-acid chain: MDKSVRVFKLRTQTEEQLVGELGKLQTELSQLRIAKIAGGTANKLGRIGIVRKAIAKYLTIINEKRRQAVKDQFKGKSLKPLDIRVKKTRAIRRKLTKKQREAVLVKTQKKLNNFGLRKFALKA.

The protein belongs to the universal ribosomal protein uL29 family.

The sequence is that of Large ribosomal subunit protein uL29 (RPL35) from Tetrahymena thermophila (strain SB210).